A 205-amino-acid polypeptide reads, in one-letter code: Holliday junction branch migration complex subunit RuvA (205 aa).

A domain I region spans residues 1-64; that stretch reads MIGRLRGTLA…EDAHLLYGFH (64 aa). The domain II stretch occupies residues 65–143; it reads EKRERELFRE…AWETSPAMFT (79 aa). Residues 144-153 are flexible linker; that stretch reads LVSDGPVPVS. The domain III stretch occupies residues 154-205; that stretch reads GASTAEADAVSALVSLGYKPQEASKAVSAIKDKAGLSSEELIRRSLKGMITK.

This sequence belongs to the RuvA family. In terms of assembly, homotetramer. Forms an RuvA(8)-RuvB(12)-Holliday junction (HJ) complex. HJ DNA is sandwiched between 2 RuvA tetramers; dsDNA enters through RuvA and exits via RuvB. An RuvB hexamer assembles on each DNA strand where it exits the tetramer. Each RuvB hexamer is contacted by two RuvA subunits (via domain III) on 2 adjacent RuvB subunits; this complex drives branch migration. In the full resolvosome a probable DNA-RuvA(4)-RuvB(12)-RuvC(2) complex forms which resolves the HJ.

It localises to the cytoplasm. Its function is as follows. The RuvA-RuvB-RuvC complex processes Holliday junction (HJ) DNA during genetic recombination and DNA repair, while the RuvA-RuvB complex plays an important role in the rescue of blocked DNA replication forks via replication fork reversal (RFR). RuvA specifically binds to HJ cruciform DNA, conferring on it an open structure. The RuvB hexamer acts as an ATP-dependent pump, pulling dsDNA into and through the RuvAB complex. HJ branch migration allows RuvC to scan DNA until it finds its consensus sequence, where it cleaves and resolves the cruciform DNA. The protein is Holliday junction branch migration complex subunit RuvA of Pseudomonas putida (strain W619).